The sequence spans 102 residues: NADH-quinone oxidoreductase subunit K (102 aa).

Transmembrane regions (helical) follow at residues 4–24 (IPME…LVGL), 30–50 (MLFV…AFIV), and 62–82 (VMFL…LALL).

The protein belongs to the complex I subunit 4L family. As to quaternary structure, NDH-1 is composed of 14 different subunits. Subunits NuoA, H, J, K, L, M, N constitute the membrane sector of the complex.

The protein resides in the cell inner membrane. The catalysed reaction is a quinone + NADH + 5 H(+)(in) = a quinol + NAD(+) + 4 H(+)(out). In terms of biological role, NDH-1 shuttles electrons from NADH, via FMN and iron-sulfur (Fe-S) centers, to quinones in the respiratory chain. The immediate electron acceptor for the enzyme in this species is believed to be ubiquinone. Couples the redox reaction to proton translocation (for every two electrons transferred, four hydrogen ions are translocated across the cytoplasmic membrane), and thus conserves the redox energy in a proton gradient. This chain is NADH-quinone oxidoreductase subunit K, found in Chromohalobacter salexigens (strain ATCC BAA-138 / DSM 3043 / CIP 106854 / NCIMB 13768 / 1H11).